Reading from the N-terminus, the 143-residue chain is Large ribosomal subunit protein uL13 (143 aa).

It belongs to the universal ribosomal protein uL13 family. In terms of assembly, part of the 50S ribosomal subunit.

Functionally, this protein is one of the early assembly proteins of the 50S ribosomal subunit, although it is not seen to bind rRNA by itself. It is important during the early stages of 50S assembly. This Chloroflexus aggregans (strain MD-66 / DSM 9485) protein is Large ribosomal subunit protein uL13.